Consider the following 148-residue polypeptide: MKIQIIAVGTIKENYIKDGIKFYLDKLKKIYDIEIVEIKEEEDPGTPASREKVLETEGERILYKIDRESFVIALAIEGKEVSTEEFASLVKKAFGMGYKKVVFVIGGSLGIWGKVKERADVNISFSKMTFPHQLTRLLLLEQIYYALL.

S-adenosyl-L-methionine is bound by residues Leu-74, Gly-106, and 125-130; that span reads FSKMTF.

It belongs to the RNA methyltransferase RlmH family. Homodimer.

The protein localises to the cytoplasm. It carries out the reaction pseudouridine(1915) in 23S rRNA + S-adenosyl-L-methionine = N(3)-methylpseudouridine(1915) in 23S rRNA + S-adenosyl-L-homocysteine + H(+). Its function is as follows. Specifically methylates the pseudouridine at position 1915 (m3Psi1915) in 23S rRNA. This is Ribosomal RNA large subunit methyltransferase H 2 from Caldanaerobacter subterraneus subsp. tengcongensis (strain DSM 15242 / JCM 11007 / NBRC 100824 / MB4) (Thermoanaerobacter tengcongensis).